The primary structure comprises 235 residues: LexA repressor (235 aa).

Residues 26 to 46 (FDEMKEALDLASKSGIHRLIT) constitute a DNA-binding region (H-T-H motif). The disordered stretch occupies residues 72 to 104 (QATTAAPPKGRGAFRPQVLEGGGQAPTTSAQPQ). Active-site for autocatalytic cleavage activity residues include serine 156 and lysine 193.

It belongs to the peptidase S24 family. As to quaternary structure, homodimer.

The enzyme catalyses Hydrolysis of Ala-|-Gly bond in repressor LexA.. Represses a number of genes involved in the response to DNA damage (SOS response), including recA and lexA. In the presence of single-stranded DNA, RecA interacts with LexA causing an autocatalytic cleavage which disrupts the DNA-binding part of LexA, leading to derepression of the SOS regulon and eventually DNA repair. The polypeptide is LexA repressor (Caulobacter sp. (strain K31)).